Here is a 3416-residue protein sequence, read N- to C-terminus: MAKGAVLKGKGGGPPRRVPKETAKKTRQGPGRLPNGLVLMRMMGVLWHMVAGTARNPILKRFWATVPVRQAIAALRKIRKTVGLLLDSLNKRRGKRRSTTGLLTPILLACLATLVFSATVRRERTGNMVIRAEGKDAATQVEVMNGTCTILATDMGSWCDDSIMYECVTIDSGEEPVDVDCFCKGVERVSLEYGRCGKPAGGRNRRSVSIPVHAHSDLTGRGHKWLKGDSVKTHLTRVEGWVWKNKFLTAAFCAVVWMVTDSLPTRFIVITVALCLAPTYATRCTHLQNRDFVSGTQGTTRVSLVLELGGCVTLTAEGKPSVDVWLDDIHQENPAKTREYCLHAKLANSKVAARCPAMGPATLPEEHQASTVCRRDQSDRGWGNHCGLFGKGSIVACAKFSCEAKKKATGYVYDVNKITYVVKVEPHTGDYLAANESHSNRKTASFTTQSEKTILTLGDYGDISLTCRVTSGVDPAQTVVLELDKTAEHLPKAWQVHRDWFEDLSLPWRHGGAQEWNHADRLVEFGEPHAVKMDIFNLGDQTGILLKSLAGVPVANIEGSKYHLQSGHVTCDVGLEKLKMKGMTYTVCEGSKFAWKRPPTDSGHDTVVMEVTYTGSKPCRIPVRAVAHGEPNVNVASLITPNPSMETTGGGFVELQLPPGDNIIYVGELSHQWFQKGSTIGRVLEKTRRGIERLTVVGEHAWDFGSVGGMLSSVGKALHTAFGAAFNTIFGGVGFLPRILLGVALAWLGLNSRNPTLSVGFLITGGLVLTMTLGVGADMGCAIDANRMELRCGEGLVVWREVTDWYDGYAFHPESPSVLAASLKEAYEEGICGIVPQNRLEMAMWRRVEAVLNLALAESDANLTVVVDKRDPSDYRGGKVGTLRRSGKEMKTSWKGWSQSFVWSVPEAPRRFMVGVEGAGECPLDKRRTGVFTVAEFGMGMRTKVFLDLRETASSDCDTGVMGAAVKSGHAVHTDQSLWMRSHRNATGVFISELIVTDLRNCTWPASHTLDNAGVVDSKLFLPAGLAGPRSHYNHIPGYAEQVKGPWSQTPLRVVREPCPGTAVKIDQSCDKRGASLRSTTESGKAIPEWCCRTCELPPVTFRSGTDCWYAMEIRPVHQQGGLVRSMVLADNGAMLSEGGVPGIVAVFVVLELVIRRRPTTGSSVVWCGMVVLGLVVTGLVTIEGLCRYVVAVGILMSMELGPEIVALVLLQAVFDMRTGLLVAFAVKRAYTTREAVATYFLLLVLELGFPEASLSNIWKWADSLAMGALILQACGQEGRTRVGYLLAAMMTQKDMVIIHTGLTIFLSAATAMAVWSMIKGQRDQKGLSWATPLAGLLGGEGVGLRLLAFRKLAERRNRRSFSEPLTVVGVMLTVASGMVRHTSQEALCALVAGAFLLLMMVLGTRKMQLTAEWCGEVEWNPDLVNEGGEVNLKVRQDAMGNLHLTEVEKEERAMALWLLAGLVASAFHWAGILIVLAVWTLFEMLGSGRRSELVFSGQETRTERNRPFEIKDGAYRIYSPGLLWGHRQIGVGYGAKGVLHTMWHVTRGAALVVDEAISGPYWADVREDVVCYGGAWSLESRWRGETVQVHAFPPGRPQETHQCQPGELILENGRKLGAVPIDLSKGTSGSPIINAQGEVVGLYGNGLKTNEAYVSSIAQGEAEKSRPEIPLSVQGTGWMSKGQITVLDMHPGSGKTHRVLPELVRQCADRGMRTLVLAPTRVVLKEMERALAGKKVRFHSPAVEGQTTAGAIVDVMCHATYVHRRLLPQGRQNWEVAIMDEAHWTDPHSIAARGHLYSLAKENRCALVLMTATPPGRGDPFPESNGAIMSEERAIPDGEWREGFDWITEYEGRTAWFVPSISKGGAVARTLRQRGKSVICLNSKTFEKDYLRVREEKPDFVVTTDISEMGANLDVSRVIDGRTNIKPEEVDGKVELTGTRKVTTASAAQRRGRVGRTSGRTDEYIYSGQCDDDDTSLVQWKEAQILLDNITTLRGPVATFYGPEQVKMPEVAGHYRLNEEKRKHFRHLMTQCDFTPWLAWHVATNTSNVLDRSWTWQGPEENAIDGADGDLVRFKTPGGSERVLQPVWKDCRMFREGRDVKDFILYASGRRSVGDVLGGLAGVPGLLRHRCASALDVVYTLLNENPGSRAMRMAERDAPEAFLTIVEVAVLGVATLGILWCFVARASVSRMFLGTVVLFAALFLLWIGGVDYGHMAGIALIFYTLLTVLQPEPGKQRSSDDNRLAYFLLGLFSLAGLVTANEMGMLDKTKADLAGLVWRGEQRHPAWEEWTNVDIQPARSWGTYVLIVSLFTPYMLHQLQTKIQQLVNSSVASGAQAMRDLGGGTPFFGVAGHVIALGVTSLVGATPMSLGLGVALAAFHLAIVASGLEAELTQRAHRVFFSAMVKNPMVDGDVINPFPDGETKPALYERRMSLILAIALCMGSVVLNRTAASMTEAGAVGLAALGQLVHPETETLWTMPMACGMAGLVRGSFWGLLPMGHRLWLRTTGTRRGGAEGETLGDIWKRRLNGCSREEFFQYRRSGVMETERDKARELLKRGETNMGLAVSRGTAKLAWLEERGYATLKGEVVDLGCGRGGWSYYAASRPAVMGVKAYTIGGKGHEVPRLITSLGWNLIKFRTGMDVYSLEAHRADTILCDIGESSPDPLAEGERSRRVILLMEKWKLRNPDASCVFKVLAPYRPEVLEALHRFQLQWGGGLVRVPFSRNSTHEMYFSTAISGNIINSVNTQSRKLLARFGDQRGPTKVPEVDLGTGTRCVVLAEDKVREADVAERIAALKTQYGDSWHVDKEHPYRTWQYWGSYKTEATGSAASLINGVVKLLSWPWNAREDVVRMAMTDTTAFGQQRVFKEKVDTKAQEPQVGTKIIMRAVNDWIFERLAGKKTPRLCTREEFIAKVRSNAALGAWSDEQNRWPNAREAVEDPEFWRLVDEERERHLGGRCAQCVYNMMGKREKKLGEFGVAKGSRAIWYMWLGSRYLEFEALGFLNEDHWASRDLSGAGVEGTSLNYLGWHLKKLSELEGGLFYADDTAGWDTRITNADLEDEEQILRYLEGEHRTLAKTILEKAYHAKVVKVARPSSSGGCVMDIITRRDQRGSGQVVTYALNTLTNIKVQLIRMMEGEGVIGPSDSQDPRLLRVEAWLKEHGEERLTRMLVSGDDCVVRPIDDRFGKALYFLNDMAKVRKDIGEWEPSEGYSSWEEVPFCSHHFHELTMKDGRVIIVPCRDQDELVGRARVSPGCGWSVRETACLSKAYGQMWLLSYFHRRDLRTLGLAICSAVPIDWVPQGRTTWSIHASGAWMTTEDMLEVWNRVWILDNPFMGDKGKVREWRDIPYLPKSQDGLCSSLVGRRERAEWAKNIWGSVEKVRRMIGPERYADYLSCMDRHELHWDLKLESNII.

The tract at residues 1–34 (MAKGAVLKGKGGGPPRRVPKETAKKTRQGPGRLP) is disordered. Residues 1-99 (MAKGAVLKGK…NKRRGKRRST (99 aa)) are Cytoplasmic-facing. A propeptide spans 97-117 (RSTTGLLTPILLACLATLVFS) (ER anchor for the capsid protein C, removed in mature form by serine protease NS3). Residues 100–120 (TGLLTPILLACLATLVFSATV) traverse the membrane as a helical segment. Topologically, residues 121–243 (RRERTGNMVI…HLTRVEGWVW (123 aa)) are extracellular. The N-linked (GlcNAc...) asparagine; by host glycan is linked to Asn-145. Residues 244–261 (KNKFLTAAFCAVVWMVTD) form a helical membrane-spanning segment. Position 262 (Ser-262) is a topological domain, cytoplasmic. Residues 263-281 (LPTRFIVITVALCLAPTYA) form a helical membrane-spanning segment. The Extracellular segment spans residues 282-728 (TRCTHLQNRD…HTAFGAAFNT (447 aa)). Intrachain disulfides connect Cys-284–Cys-311, Cys-341–Cys-397, Cys-341–Cys-402, Cys-355–Cys-386, Cys-373–Cys-397, and Cys-373–Cys-402. The fusion peptide stretch occupies residues 379-392 (DRGWGNHCGLFGKG). An N-linked (GlcNAc...) asparagine; by host glycan is attached at Asn-435. 2 cysteine pairs are disulfide-bonded: Cys-467–Cys-571 and Cys-588–Cys-619. The chain crosses the membrane as a helical span at residues 729–749 (IFGGVGFLPRILLGVALAWLG). Over 750 to 756 (LNSRNPT) the chain is Cytoplasmic. The helical transmembrane segment at 757–777 (LSVGFLITGGLVLTMTLGVGA) threads the bilayer. Residues 778–1134 (DMGCAIDANR…RSMVLADNGA (357 aa)) are Extracellular-facing. 6 cysteine pairs are disulfide-bonded: Cys-781/Cys-792, Cys-832/Cys-922, Cys-957/Cys-1002, Cys-1059/Cys-1108, Cys-1070/Cys-1092, and Cys-1091/Cys-1095. Residues Asn-862, Asn-985, and Asn-1001 are each glycosylated (N-linked (GlcNAc...) asparagine; by host). The helical transmembrane segment at 1135 to 1155 (MLSEGGVPGIVAVFVVLELVI) threads the bilayer. Residues 1156-1164 (RRRPTTGSS) lie on the Lumenal side of the membrane. Residues 1165–1185 (VVWCGMVVLGLVVTGLVTIEG) traverse the membrane as a helical segment. The Cytoplasmic portion of the chain corresponds to 1186-1189 (LCRY). A helical transmembrane segment spans residues 1190 to 1210 (VVAVGILMSMELGPEIVALVL). At 1211-1235 (LQAVFDMRTGLLVAFAVKRAYTTRE) the chain is on the lumenal side. The chain crosses the membrane as a helical span at residues 1236-1256 (AVATYFLLLVLELGFPEASLS). Topologically, residues 1257–1295 (NIWKWADSLAMGALILQACGQEGRTRVGYLLAAMMTQKD) are cytoplasmic. A helical membrane pass occupies residues 1296-1316 (MVIIHTGLTIFLSAATAMAVW). Residues 1317–1361 (SMIKGQRDQKGLSWATPLAGLLGGEGVGLRLLAFRKLAERRNRRS) are Lumenal-facing. The helical transmembrane segment at 1362 to 1379 (FSEPLTVVGVMLTVASGM) threads the bilayer. Residues 1380–1384 (VRHTS) lie on the Cytoplasmic side of the membrane. Residues 1385-1405 (QEALCALVAGAFLLLMMVLGT) form a helical membrane-spanning segment. Residues 1406–1456 (RKMQLTAEWCGEVEWNPDLVNEGGEVNLKVRQDAMGNLHLTEVEKEERAMA) are Lumenal-facing. The interval 1412–1451 (AEWCGEVEWNPDLVNEGGEVNLKVRQDAMGNLHLTEVEKE) is interacts with and activates NS3 protease. Positions 1457-1477 (LWLLAGLVASAFHWAGILIVL) form an intramembrane region, helical. Residues 1478–2162 (AVWTLFEMLG…RMAERDAPEA (685 aa)) lie on the Lumenal side of the membrane. Positions 1492–1671 (SELVFSGQET…EAEKSRPEIP (180 aa)) constitute a Peptidase S7 domain. Catalysis depends on charge relay system; for serine protease NS3 activity residues His-1545, Asp-1569, and Ser-1629. One can recognise a Helicase ATP-binding domain in the interval 1677 to 1833 (TGWMSKGQIT…ESNGAIMSEE (157 aa)). 1690–1697 (MHPGSGKT) is an ATP binding site. Residues 1781–1784 (DEAH) carry the DEAH box motif. A Helicase C-terminal domain is found at 1844-2002 (GFDWITEYEG…TLRGPVATFY (159 aa)). The residue at position 1885 (Lys-1885) is an N6-acetyllysine; by host. The helical transmembrane segment at 2163-2183 (FLTIVEVAVLGVATLGILWCF) threads the bilayer. Residues 2184–2191 (VARASVSR) are Cytoplasmic-facing. Residues 2192-2211 (MFLGTVVLFAALFLLWIGGV) constitute an intramembrane region (helical). A topological domain (lumenal) is located at residue Asp-2212. Residues 2213–2233 (YGHMAGIALIFYTLLTVLQPE) traverse the membrane as a helical segment. At 2234–2246 (PGKQRSSDDNRLA) the chain is on the cytoplasmic side. A helical membrane pass occupies residues 2247-2267 (YFLLGLFSLAGLVTANEMGML). Over 2268–2301 (DKTKADLAGLVWRGEQRHPAWEEWTNVDIQPARS) the chain is Lumenal. An intramembrane region (helical) is located at residues 2302–2322 (WGTYVLIVSLFTPYMLHQLQT). Residues 2323-2345 (KIQQLVNSSVASGAQAMRDLGGG) lie on the Lumenal side of the membrane. An intramembrane region (helical) is located at residues 2346-2366 (TPFFGVAGHVIALGVTSLVGA). Residues 2367-2368 (TP) lie on the Lumenal side of the membrane. The helical transmembrane segment at 2369–2389 (MSLGLGVALAAFHLAIVASGL) threads the bilayer. At 2390-2432 (EAELTQRAHRVFFSAMVKNPMVDGDVINPFPDGETKPALYERR) the chain is on the cytoplasmic side. The chain crosses the membrane as a helical span at residues 2433 to 2453 (MSLILAIALCMGSVVLNRTAA). The Lumenal segment spans residues 2454-2476 (SMTEAGAVGLAALGQLVHPETET). The helical transmembrane segment at 2477–2497 (LWTMPMACGMAGLVRGSFWGL) threads the bilayer. Residues 2498–3416 (LPMGHRLWLR…WDLKLESNII (919 aa)) are Cytoplasmic-facing. One can recognise an mRNA cap 0-1 NS5-type MT domain in the interval 2514-2778 (GGAEGETLGD…EVDLGTGTRC (265 aa)). Ser-2569 is an S-adenosyl-L-methionine binding site. Residue Ser-2569 is modified to Phosphoserine. Catalysis depends on Lys-2574, which acts as the For 2'-O-MTase activity. The S-adenosyl-L-methionine site is built by Gly-2599, Trp-2600, Thr-2617, Ile-2618, Asp-2644, and Val-2645. Asp-2659 acts as the For 2'-O-MTase activity in catalysis. An S-adenosyl-L-methionine-binding site is contributed by Ile-2660. Residues Lys-2696 and Glu-2732 each act as for 2'-O-MTase activity in the active site. An interaction with host SCRIB region spans residues 2732–2736 (EMYFS). Tyr-2734 is an S-adenosyl-L-methionine binding site. 4 residues coordinate Zn(2+): Glu-2952, His-2956, Cys-2961, and Cys-2964. One can recognise a RdRp catalytic domain in the interval 3042–3191 (GLFYADDTAG…RPIDDRFGKA (150 aa)). Positions 3226, 3242, and 3361 each coordinate Zn(2+).

The protein in the N-terminal section; belongs to the class I-like SAM-binding methyltransferase superfamily. mRNA cap 0-1 NS5-type methyltransferase family. Homodimer. Interacts (via N-terminus) with host EXOC1 (via C-terminus); this interaction results in EXOC1 degradation through the proteasome degradation pathway. In terms of assembly, forms heterodimers with envelope protein E in the endoplasmic reticulum and Golgi. As to quaternary structure, homodimer; in the endoplasmic reticulum and Golgi. Interacts with protein prM. Interacts with non-structural protein 1. Homodimer; Homohexamer when secreted. Interacts with envelope protein E. NS1 interacts with NS4B. Interacts with host complement protein CFH; this interaction leads to the degradation of C3. In terms of assembly, interacts (via N-terminus) with serine protease NS3. As to quaternary structure, forms a heterodimer with serine protease NS3. May form homooligomers. Forms a heterodimer with NS2B. Interacts with non-structural protein 2A (via N-terminus). Interacts with NS4B. Interacts with unphosphorylated RNA-directed RNA polymerase NS5; this interaction stimulates RNA-directed RNA polymerase NS5 guanylyltransferase activity. In terms of assembly, interacts with serine protease NS3. As to quaternary structure, homodimer. Interacts with host STAT2; this interaction inhibits the phosphorylation of the latter, and, when all viral proteins are present (polyprotein), targets STAT2 for degradation. Interacts with serine protease NS3. In terms of processing, specific enzymatic cleavages in vivo yield mature proteins. Cleavages in the lumen of endoplasmic reticulum are performed by host signal peptidase, whereas cleavages in the cytoplasmic side are performed by serine protease NS3. Signal cleavage at the 2K-4B site requires a prior NS3 protease-mediated cleavage at the 4A-2K site. Cleaved in post-Golgi vesicles by a host furin, releasing the mature small envelope protein M, and peptide pr. This cleavage is incomplete as up to 30% of viral particles still carry uncleaved prM. Post-translationally, N-glycosylated. In terms of processing, N-glycosylated. The excreted form is glycosylated and this is required for efficient secretion of the protein from infected cells. Acetylated by host KAT5. Acetylation modulates NS3 RNA-binding and unwinding activities and plays an important positive role for viral replication. Post-translationally, phosphorylated on serines residues. This phosphorylation may trigger NS5 nuclear localization.

The protein localises to the virion. The protein resides in the host nucleus. It is found in the host cytoplasm. Its subcellular location is the host perinuclear region. It localises to the secreted. The protein localises to the virion membrane. The protein resides in the host endoplasmic reticulum membrane. The enzyme catalyses Selective hydrolysis of -Xaa-Xaa-|-Yaa- bonds in which each of the Xaa can be either Arg or Lys and Yaa can be either Ser or Ala.. The catalysed reaction is RNA(n) + a ribonucleoside 5'-triphosphate = RNA(n+1) + diphosphate. It catalyses the reaction a ribonucleoside 5'-triphosphate + H2O = a ribonucleoside 5'-diphosphate + phosphate + H(+). It carries out the reaction ATP + H2O = ADP + phosphate + H(+). The enzyme catalyses a 5'-end (5'-triphosphoguanosine)-ribonucleoside in mRNA + S-adenosyl-L-methionine = a 5'-end (N(7)-methyl 5'-triphosphoguanosine)-ribonucleoside in mRNA + S-adenosyl-L-homocysteine. The catalysed reaction is a 5'-end (N(7)-methyl 5'-triphosphoguanosine)-ribonucleoside in mRNA + S-adenosyl-L-methionine = a 5'-end (N(7)-methyl 5'-triphosphoguanosine)-(2'-O-methyl-ribonucleoside) in mRNA + S-adenosyl-L-homocysteine + H(+). Functionally, plays a role in virus budding by binding to the cell membrane and gathering the viral RNA into a nucleocapsid that forms the core of a mature virus particle. During virus entry, may induce genome penetration into the host cytoplasm after hemifusion induced by the surface proteins. Can migrate to the cell nucleus where it modulates host functions. In terms of biological role, inhibits RNA silencing by interfering with host Dicer. Its function is as follows. Prevents premature fusion activity of envelope proteins in trans-Golgi by binding to envelope protein E at pH6.0. After virion release in extracellular space, gets dissociated from E dimers. Acts as a chaperone for envelope protein E during intracellular virion assembly by masking and inactivating envelope protein E fusion peptide. prM is the only viral peptide matured by host furin in the trans-Golgi network probably to avoid catastrophic activation of the viral fusion activity in acidic Golgi compartment prior to virion release. prM-E cleavage is inefficient, and many virions are only partially matured. These uncleaved prM would play a role in immune evasion. Functionally, may play a role in virus budding. Exerts cytotoxic effects by activating a mitochondrial apoptotic pathway through M ectodomain. May display a viroporin activity. In terms of biological role, binds to host cell surface receptor and mediates fusion between viral and cellular membranes. Envelope protein is synthesized in the endoplasmic reticulum in the form of heterodimer with protein prM. They play a role in virion budding in the ER, and the newly formed immature particle is covered with 60 spikes composed of heterodimer between precursor prM and envelope protein E. The virion is transported to the Golgi apparatus where the low pH causes dissociation of PrM-E heterodimers and formation of E homodimers. prM-E cleavage is inefficient, and many virions are only partially matured. These uncleaved prM would play a role in immune evasion. Its function is as follows. Involved in immune evasion, pathogenesis and viral replication. Once cleaved off the polyprotein, is targeted to three destinations: the viral replication cycle, the plasma membrane and the extracellular compartment. Essential for viral replication. Required for formation of the replication complex and recruitment of other non-structural proteins to the ER-derived membrane structures. Excreted as a hexameric lipoparticle that plays a role against host immune response. Antagonizing the complement function. Binds to the host macrophages and dendritic cells. Inhibits signal transduction originating from Toll-like receptor 3 (TLR3). Component of the viral RNA replication complex that functions in virion assembly and antagonizes the host immune response. Functionally, required cofactor for the serine protease function of NS3. May have membrane-destabilizing activity and form viroporins. In terms of biological role, displays three enzymatic activities: serine protease, NTPase and RNA helicase. NS3 serine protease, in association with NS2B, performs its autocleavage and cleaves the polyprotein at dibasic sites in the cytoplasm: C-prM, NS2A-NS2B, NS2B-NS3, NS3-NS4A, NS4A-2K and NS4B-NS5. NS3 RNA helicase binds RNA and unwinds dsRNA in the 3' to 5' direction. Its function is as follows. Regulates the ATPase activity of the NS3 helicase activity. NS4A allows NS3 helicase to conserve energy during unwinding. Functions as a signal peptide for NS4B and is required for the interferon antagonism activity of the latter. Functionally, induces the formation of ER-derived membrane vesicles where the viral replication takes place. Inhibits interferon (IFN)-induced host STAT1 phosphorylation and nuclear translocation, thereby preventing the establishment of cellular antiviral state by blocking the IFN-alpha/beta pathway. Inhibits STAT2 translocation in the nucleus after IFN-alpha treatment. In terms of biological role, replicates the viral (+) and (-) RNA genome, and performs the capping of genomes in the cytoplasm. NS5 methylates viral RNA cap at guanine N-7 and ribose 2'-O positions. Besides its role in RNA genome replication, also prevents the establishment of cellular antiviral state by blocking the interferon-alpha/beta (IFN-alpha/beta) signaling pathway. Inhibits host TYK2 and STAT2 phosphorylation, thereby preventing activation of JAK-STAT signaling pathway. The protein is Genome polyprotein of Homo sapiens (Human).